A 583-amino-acid chain; its full sequence is NEDD4-binding protein 2-like 2 (583 aa).

The stretch at 162–197 (NSEKSEIDNELFQFYKEIEELEKEKDGFENSCKESE) forms a coiled coil. The segment at 549-575 (EPSHKSTQRPPPPQGRQRWGGSLGSHN) is disordered.

This Homo sapiens (Human) protein is NEDD4-binding protein 2-like 2 (N4BP2L2).